Here is a 415-residue protein sequence, read N- to C-terminus: MFAADQTIAKFDPELAAAIAAECQRQEDHIELIASENYTSPAVMEAQGSQLTNKYAEGYPGKRFYGGCEHVDVVEQLAIDRVKQLFGAEYANVQPHSGSQANQAVYFSILKPGDTVMGMNLGHGGHLTHGSPANLSGKMFNIVAYGLNDKEEIDYDDMERVAMETKPKLIIGGASAYALRFDFERMGQIAKKVGAYFMVDMAHYAGLVAAGLYPNPVPHADFVTSTTHKTLRGPRGGIILAKAEFEKSINSNVFPTLQGGPLEHVIAAKAVAFKEALQPAFKEYQQQVLKNAAIMAKTLAERGLRIVSGRTESHVFLVDLRAKGLTGKQADALLGRAHITVNKNAIPNDPETPFVTSGIRIGSPAITTRGFKEAEAIEVANMVADVLDNPNDDALIARIAEKATALCHRFPVYAK.

(6S)-5,6,7,8-tetrahydrofolate is bound by residues L121 and 125-127 (GHL). K229 carries the post-translational modification N6-(pyridoxal phosphate)lysine. Residue 352–354 (TPF) participates in (6S)-5,6,7,8-tetrahydrofolate binding.

Belongs to the SHMT family. In terms of assembly, homodimer. Pyridoxal 5'-phosphate is required as a cofactor.

It localises to the cytoplasm. It carries out the reaction (6R)-5,10-methylene-5,6,7,8-tetrahydrofolate + glycine + H2O = (6S)-5,6,7,8-tetrahydrofolate + L-serine. It functions in the pathway one-carbon metabolism; tetrahydrofolate interconversion. It participates in amino-acid biosynthesis; glycine biosynthesis; glycine from L-serine: step 1/1. Catalyzes the reversible interconversion of serine and glycine with tetrahydrofolate (THF) serving as the one-carbon carrier. This reaction serves as the major source of one-carbon groups required for the biosynthesis of purines, thymidylate, methionine, and other important biomolecules. Also exhibits THF-independent aldolase activity toward beta-hydroxyamino acids, producing glycine and aldehydes, via a retro-aldol mechanism. The sequence is that of Serine hydroxymethyltransferase from Chromobacterium violaceum (strain ATCC 12472 / DSM 30191 / JCM 1249 / CCUG 213 / NBRC 12614 / NCIMB 9131 / NCTC 9757 / MK).